The following is a 430-amino-acid chain: Mitochondrial distribution and morphology protein 12 (430 aa).

The region spanning methionine 1 to isoleucine 430 is the SMP-LTD domain. Disordered regions lie at residues aspartate 61–asparagine 117, threonine 177–glutamate 276, and methionine 352–serine 377. Positions phenylalanine 69–glutamate 82 are enriched in acidic residues. Residues serine 85–asparagine 96 are compositionally biased toward basic and acidic residues. Polar residues-rich tracts occupy residues serine 211–isoleucine 233 and alanine 241–glutamine 251. Residues proline 265–glutamate 276 are compositionally biased toward basic and acidic residues.

It belongs to the MDM12 family. As to quaternary structure, component of the ER-mitochondria encounter structure (ERMES) or MDM complex, composed of MMM1, MDM10, MDM12 and MDM34. An MMM1 homodimer associates with one molecule of MDM12 on each side in a pairwise head-to-tail manner, and the SMP-LTD domains of MMM1 and MDM12 generate a continuous hydrophobic tunnel for phospholipid trafficking.

It localises to the mitochondrion outer membrane. The protein localises to the endoplasmic reticulum membrane. Functionally, component of the ERMES/MDM complex, which serves as a molecular tether to connect the endoplasmic reticulum (ER) and mitochondria. Components of this complex are involved in the control of mitochondrial shape and protein biogenesis, and function in nonvesicular lipid trafficking between the ER and mitochondria. MDM12 is required for the interaction of the ER-resident membrane protein MMM1 and the outer mitochondrial membrane-resident beta-barrel protein MDM10. The MDM12-MMM1 subcomplex functions in the major beta-barrel assembly pathway that is responsible for biogenesis of all mitochondrial outer membrane beta-barrel proteins, and acts in a late step after the SAM complex. The MDM10-MDM12-MMM1 subcomplex further acts in the TOM40-specific pathway after the action of the MDM12-MMM1 complex. Essential for establishing and maintaining the structure of mitochondria and maintenance of mtDNA nucleoids. This is Mitochondrial distribution and morphology protein 12 from Ajellomyces capsulatus (strain G186AR / H82 / ATCC MYA-2454 / RMSCC 2432) (Darling's disease fungus).